Consider the following 340-residue polypeptide: Phenylalanine--tRNA ligase alpha subunit (340 aa).

Position 255 (glutamate 255) interacts with Mg(2+).

Belongs to the class-II aminoacyl-tRNA synthetase family. Phe-tRNA synthetase alpha subunit type 1 subfamily. Tetramer of two alpha and two beta subunits. The cofactor is Mg(2+).

The protein localises to the cytoplasm. The catalysed reaction is tRNA(Phe) + L-phenylalanine + ATP = L-phenylalanyl-tRNA(Phe) + AMP + diphosphate + H(+). This Heliobacterium modesticaldum (strain ATCC 51547 / Ice1) protein is Phenylalanine--tRNA ligase alpha subunit.